Consider the following 354-residue polypeptide: Putative cinnamyl alcohol dehydrogenase 4 (354 aa).

Residues Cys-47, His-69, Glu-70, Cys-100, Cys-103, Cys-106, Cys-114, and Cys-163 each coordinate Zn(2+). NADP(+) contacts are provided by residues Thr-167, 188–193 (GLGGLG), 211–216 (STSESK), Thr-251, and 297–299 (SVT).

The protein belongs to the zinc-containing alcohol dehydrogenase family. As to quaternary structure, homodimer. Zn(2+) is required as a cofactor.

The enzyme catalyses (E)-cinnamyl alcohol + NADP(+) = (E)-cinnamaldehyde + NADPH + H(+). The catalysed reaction is (E)-coniferol + NADP(+) = (E)-coniferaldehyde + NADPH + H(+). It carries out the reaction (E)-sinapyl alcohol + NADP(+) = (E)-sinapaldehyde + NADPH + H(+). It catalyses the reaction (E)-4-coumaroyl alcohol + NADP(+) = (E)-4-coumaraldehyde + NADPH + H(+). The enzyme catalyses (E)-caffeyl alcohol + NADP(+) = (E)-caffeyl aldehyde + NADPH + H(+). The protein operates within aromatic compound metabolism; phenylpropanoid biosynthesis. In terms of biological role, involved in lignin biosynthesis. Catalyzes the final step specific for the production of lignin monomers. Catalyzes the NADPH-dependent reduction of coniferaldehyde, 5-hydroxyconiferaldehyde, sinapaldehyde, 4-coumaraldehyde and caffeyl aldehyde to their respective alcohols. In Oryza sativa subsp. japonica (Rice), this protein is Putative cinnamyl alcohol dehydrogenase 4.